We begin with the raw amino-acid sequence, 408 residues long: Acetate kinase (408 aa).

Residue Asn7 coordinates Mg(2+). Lys14 serves as a coordination point for ATP. Arg91 lines the substrate pocket. Residue Asp148 is the Proton donor/acceptor of the active site. Residues 208–212 (HLGNG), 283–285 (DFR), and 331–335 (GIGEN) each bind ATP. Glu384 contacts Mg(2+).

It belongs to the acetokinase family. As to quaternary structure, homodimer. Mg(2+) serves as cofactor. Requires Mn(2+) as cofactor.

It is found in the cytoplasm. It carries out the reaction acetate + ATP = acetyl phosphate + ADP. The protein operates within metabolic intermediate biosynthesis; acetyl-CoA biosynthesis; acetyl-CoA from acetate: step 1/2. Functionally, catalyzes the formation of acetyl phosphate from acetate and ATP. Can also catalyze the reverse reaction. This chain is Acetate kinase, found in Methanosarcina barkeri (strain Fusaro / DSM 804).